A 219-amino-acid chain; its full sequence is MSHYRQRFLQLALDSNALCFGEFTLKSGRISPYFFNAGHFNSGAKTAALAQCYADAIDAANMNFDLVFGPAYKGIPLATALACEYARRERDLLLAFNRKEVKNHGEGGTLIGAPLNGRKILIIDDVITAGTAIREVLRIIRNAGGTPTGIAVALNRQEIASETNRQSSVQALMAETGIPVVAIATLSDLLAFVEENASLAKFYEPLLAYKTHYGTEASD.

Position 26 (lysine 26) interacts with 5-phospho-alpha-D-ribose 1-diphosphate. Residue 34–35 (FF) participates in orotate binding. Residues 72–73 (YK), arginine 98, lysine 99, lysine 102, histidine 104, and 124–132 (DDVITAGTA) each bind 5-phospho-alpha-D-ribose 1-diphosphate. The orotate site is built by threonine 128 and arginine 156.

It belongs to the purine/pyrimidine phosphoribosyltransferase family. PyrE subfamily. As to quaternary structure, homodimer. Mg(2+) is required as a cofactor.

It carries out the reaction orotidine 5'-phosphate + diphosphate = orotate + 5-phospho-alpha-D-ribose 1-diphosphate. It functions in the pathway pyrimidine metabolism; UMP biosynthesis via de novo pathway; UMP from orotate: step 1/2. In terms of biological role, catalyzes the transfer of a ribosyl phosphate group from 5-phosphoribose 1-diphosphate to orotate, leading to the formation of orotidine monophosphate (OMP). This chain is Orotate phosphoribosyltransferase, found in Xylella fastidiosa (strain 9a5c).